Reading from the N-terminus, the 508-residue chain is DDB1- and CUL4-associated factor 10 (508 aa).

The interval 1–75 (MSSGHPSDNE…GSASGSGCRG (75 aa)) is disordered. A compositionally biased stretch (basic and acidic residues) spans 7–17 (SDNEEPRADLL). Over residues 18 to 32 (REEEEEEEEEEDSDE) the composition is skewed to acidic residues. The span at 63-75 (GGTGSASGSGCRG) shows a compositional bias: gly residues. WD repeat units follow at residues 126–165 (QTHG…HIKT), 169–207 (AHED…SKVC), 211–250 (GHAS…EDGC), and 256–295 (FHTR…QSLE). Residues 307 to 343 (PPLSTEGSSAGSRSGGPRHTIDNKNHPHREGLSPRNS) are disordered. Residues 325–338 (HTIDNKNHPHREGL) are compositionally biased toward basic and acidic residues. WD repeat units lie at residues 356 to 396 (DRGN…QEGA), 419 to 457 (VGRG…AELV), and 475 to 508 (SHSD…QPHF).

It belongs to the WD repeat DCAF10 family.

It functions in the pathway protein modification; protein ubiquitination. May function as a substrate receptor for CUL4-DDB1 E3 ubiquitin-protein ligase complex. This Danio rerio (Zebrafish) protein is DDB1- and CUL4-associated factor 10 (dcaf10).